The chain runs to 466 residues: Ribulose bisphosphate carboxylase large chain (466 aa).

N6,N6,N6-trimethyllysine is present on Lys4. Positions 113 and 163 each coordinate substrate. Residue Lys165 is the Proton acceptor of the active site. Lys167 provides a ligand contact to substrate. Positions 191, 193, and 194 each coordinate Mg(2+). An N6-carboxylysine modification is found at Lys191. Residue His284 is the Proton acceptor of the active site. 3 residues coordinate substrate: Arg285, His317, and Ser369.

It belongs to the RuBisCO large chain family. Type I subfamily. Heterohexadecamer of 8 large chains and 8 small chains; disulfide-linked. The disulfide link is formed within the large subunit homodimers. Requires Mg(2+) as cofactor. The disulfide bond which can form in the large chain dimeric partners within the hexadecamer appears to be associated with oxidative stress and protein turnover.

It localises to the plastid. The protein localises to the chloroplast. It carries out the reaction 2 (2R)-3-phosphoglycerate + 2 H(+) = D-ribulose 1,5-bisphosphate + CO2 + H2O. The catalysed reaction is D-ribulose 1,5-bisphosphate + O2 = 2-phosphoglycolate + (2R)-3-phosphoglycerate + 2 H(+). RuBisCO catalyzes two reactions: the carboxylation of D-ribulose 1,5-bisphosphate, the primary event in carbon dioxide fixation, as well as the oxidative fragmentation of the pentose substrate in the photorespiration process. Both reactions occur simultaneously and in competition at the same active site. The protein is Ribulose bisphosphate carboxylase large chain of Proboscidea louisianica (Louisiana Devil's-claw).